The sequence spans 975 residues: Translation initiation factor IF-2 (975 aa).

Composition is skewed to basic and acidic residues over residues aspartate 48 to lysine 63 and alanine 120 to alanine 177. 2 disordered regions span residues aspartate 48–threonine 85 and lysine 98–proline 390. Positions lysine 178–glutamine 211 are enriched in low complexity. Basic and acidic residues predominate over residues aspartate 212 to arginine 263. Positions lysine 302–glycine 330 are enriched in low complexity. Over residues serine 359 to lysine 372 the composition is skewed to gly residues. One can recognise a tr-type G domain in the interval proline 475 to lysine 644. The tract at residues glycine 484–threonine 491 is G1. GTP is bound at residue glycine 484–threonine 491. Residues glycine 509 to histidine 513 are G2. Positions aspartate 530–glycine 533 are G3. GTP contacts are provided by residues aspartate 530–histidine 534 and asparagine 584–aspartate 587. A G4 region spans residues asparagine 584–aspartate 587. The G5 stretch occupies residues serine 620–lysine 622.

Belongs to the TRAFAC class translation factor GTPase superfamily. Classic translation factor GTPase family. IF-2 subfamily.

Its subcellular location is the cytoplasm. In terms of biological role, one of the essential components for the initiation of protein synthesis. Protects formylmethionyl-tRNA from spontaneous hydrolysis and promotes its binding to the 30S ribosomal subunits. Also involved in the hydrolysis of GTP during the formation of the 70S ribosomal complex. In Burkholderia pseudomallei (strain 1106a), this protein is Translation initiation factor IF-2.